We begin with the raw amino-acid sequence, 264 residues long: Small ribosomal subunit protein uS2 (264 aa).

The disordered stretch occupies residues 228–264 (VDTSATVDEEEAEVAEETESMESAEDLDADLIEEEAE). A compositionally biased stretch (acidic residues) spans 234 to 264 (VDEEEAEVAEETESMESAEDLDADLIEEEAE).

The protein belongs to the universal ribosomal protein uS2 family.

This is Small ribosomal subunit protein uS2 from Symbiobacterium thermophilum (strain DSM 24528 / JCM 14929 / IAM 14863 / T).